The sequence spans 91 residues: Protein xpaR7 (91 aa).

The protein is Protein xpaR7 (xpaR7) of Bacillus licheniformis.